Consider the following 397-residue polypeptide: F-box protein At3g28330 (397 aa).

The F-box domain maps to 6-56; sequence KKDMDFLTEDLWEIILARLPLKSIITTPKLVCKVWKSIIESRCFRDLFQSL.

In Arabidopsis thaliana (Mouse-ear cress), this protein is F-box protein At3g28330.